Here is a 424-residue protein sequence, read N- to C-terminus: Na(+), Li(+), K(+)/H(+) antiporter (424 aa).

12 consecutive transmembrane segments (helical) span residues 15–35 (VGEFFMNTSFWMVFPFLAIYF), 42–62 (GLAGMLLIISQIFSVAANLFG), 74–94 (MLVSAAVAQGFAFLLFALANS), 105–125 (VAFTLAGMCGSLYWPASQAMI), 141–161 (FYTTLNIAVVIGPLFGAVLFF), 165–185 (FELLLTVAIISVLLGLLLRFY), 227–247 (LLFVIAGILGAQTFMQLDLVI), 274–294 (TSFGILLAENGLIVALLTVVI), 305–325 (WVFFFSALLFGLSMAIFPMTS), 327–347 (FWIFFVAMAVFTFAELMVVGL), 367–389 (AASLRYTIGRMIAPISIPMTAWF), and 393–415 (WTFIILGSFAVLSGFVYLWMFHL).

This sequence belongs to the major facilitator superfamily.

It localises to the cell membrane. With respect to regulation, norfloxacin transport is inhibited by CCCP. Exhibits dual functions as a Na(+)(Li(+)/K(+))/H(+) antiporter and a multidrug efflux pump. Catalyzes the efflux of Na(+), Li(+) and K(+) in exchange for external protons. Shows a preference for Na(+), followed by K(+) and Li(+). Can also function as a multidrug efflux pump. Transports ethidium bromide and norfloxacin. This chain is Na(+), Li(+), K(+)/H(+) antiporter, found in Planococcus maritimus.